Consider the following 206-residue polypeptide: LexA repressor (206 aa).

The H-T-H motif DNA-binding region spans 28-48 (RAEIASELGFKSANAAEEHLK). Catalysis depends on for autocatalytic cleavage activity residues Ser-122 and Lys-160.

The protein belongs to the peptidase S24 family. As to quaternary structure, homodimer.

The catalysed reaction is Hydrolysis of Ala-|-Gly bond in repressor LexA.. Its function is as follows. Represses a number of genes involved in the response to DNA damage (SOS response), including recA and lexA. In the presence of single-stranded DNA, RecA interacts with LexA causing an autocatalytic cleavage which disrupts the DNA-binding part of LexA, leading to derepression of the SOS regulon and eventually DNA repair. This is LexA repressor from Tolumonas auensis (strain DSM 9187 / NBRC 110442 / TA 4).